Consider the following 62-residue polypeptide: Photosystem II reaction center protein Z (62 aa).

A run of 2 helical transmembrane segments spans residues 8 to 28 (AVFA…VVFA) and 41 to 61 (FSGT…NSLI).

It belongs to the PsbZ family. In terms of assembly, PSII is composed of 1 copy each of membrane proteins PsbA, PsbB, PsbC, PsbD, PsbE, PsbF, PsbH, PsbI, PsbJ, PsbK, PsbL, PsbM, PsbT, PsbY, PsbZ, Psb30/Ycf12, at least 3 peripheral proteins of the oxygen-evolving complex and a large number of cofactors. It forms dimeric complexes.

Its subcellular location is the plastid. The protein resides in the chloroplast thylakoid membrane. Functionally, may control the interaction of photosystem II (PSII) cores with the light-harvesting antenna, regulates electron flow through the 2 photosystem reaction centers. PSII is a light-driven water plastoquinone oxidoreductase, using light energy to abstract electrons from H(2)O, generating a proton gradient subsequently used for ATP formation. The polypeptide is Photosystem II reaction center protein Z (Oenothera elata subsp. hookeri (Hooker's evening primrose)).